The chain runs to 406 residues: Elongation factor Ts, mitochondrial (406 aa).

The disordered stretch occupies residues 387-406 (ARPSDETSFADQVKEAAGLA).

This sequence belongs to the EF-Ts family.

The protein resides in the mitochondrion. Its function is as follows. Associates with the EF-Tu.GDP complex and induces the exchange of GDP to GTP. It remains bound to the aminoacyl-tRNA.EF-Tu.GTP complex up to the GTP hydrolysis stage on the ribosome. The protein is Elongation factor Ts, mitochondrial of Malassezia globosa (strain ATCC MYA-4612 / CBS 7966) (Dandruff-associated fungus).